Here is a 170-residue protein sequence, read N- to C-terminus: Adenine phosphoribosyltransferase (170 aa).

It belongs to the purine/pyrimidine phosphoribosyltransferase family. As to quaternary structure, homodimer.

Its subcellular location is the cytoplasm. The catalysed reaction is AMP + diphosphate = 5-phospho-alpha-D-ribose 1-diphosphate + adenine. The protein operates within purine metabolism; AMP biosynthesis via salvage pathway; AMP from adenine: step 1/1. Catalyzes a salvage reaction resulting in the formation of AMP, that is energically less costly than de novo synthesis. This is Adenine phosphoribosyltransferase from Alkaliphilus metalliredigens (strain QYMF).